We begin with the raw amino-acid sequence, 360 residues long: Decorin (360 aa).

The signal sequence occupies residues 1–16; the sequence is MKATIIFLLLAQVSWA. Positions 17-30 are excised as a propeptide; the sequence is GPFQQRGLFDFMLE. Residue Ser-34 is glycosylated (O-linked (Xyl...) (glycosaminoglycan) serine). 2 cysteine pairs are disulfide-bonded: Cys-55-Cys-61 and Cys-59-Cys-68. LRR repeat units lie at residues 74–94, 95–118, 119–142, 143–163, 164–187, 188–213, 214–234, 235–258, 259–282, 283–305, 306–335, and 336–360; these read DKVP…NNKI, TEIK…NNKI, SKIS…KNHL, KELP…ENEI, TKVR…TNPL, KSSG…DTNI, TTIP…GNKI, TKVD…FNSI, SAVD…NNKL, IKVP…NNNI, SAVG…SNPV, and QYWE…GNYK. A glycan (N-linked (GlcNAc...) asparagine) is linked at Asn-212. N-linked (GlcNAc...) asparagine glycosylation is found at Asn-263 and Asn-304. A disulfide bond links Cys-314 and Cys-347.

Belongs to the small leucine-rich proteoglycan (SLRP) family. SLRP class I subfamily. Binds to type I and type II collagen, fibronectin and TGF-beta. Forms a ternary complex with MFAP2 and ELN. Interacts with DPT. Post-translationally, the attached glycosaminoglycan chain can be either chondroitin sulfate or dermatan sulfate depending upon the tissue of origin.

It is found in the secreted. The protein resides in the extracellular space. It localises to the extracellular matrix. May affect the rate of fibrils formation. This chain is Decorin (DCN), found in Equus caballus (Horse).